The primary structure comprises 613 residues: Dihydroxy-acid dehydratase (613 aa).

Asp-81 is a Mg(2+) binding site. Residue Cys-122 coordinates [2Fe-2S] cluster. Asp-123 and Lys-124 together coordinate Mg(2+). Position 124 is an N6-carboxylysine (Lys-124). Cys-193 contacts [2Fe-2S] cluster. Glu-489 lines the Mg(2+) pocket. The Proton acceptor role is filled by Ser-515.

This sequence belongs to the IlvD/Edd family. In terms of assembly, homodimer. [2Fe-2S] cluster is required as a cofactor. It depends on Mg(2+) as a cofactor.

The enzyme catalyses (2R)-2,3-dihydroxy-3-methylbutanoate = 3-methyl-2-oxobutanoate + H2O. It carries out the reaction (2R,3R)-2,3-dihydroxy-3-methylpentanoate = (S)-3-methyl-2-oxopentanoate + H2O. It participates in amino-acid biosynthesis; L-isoleucine biosynthesis; L-isoleucine from 2-oxobutanoate: step 3/4. Its pathway is amino-acid biosynthesis; L-valine biosynthesis; L-valine from pyruvate: step 3/4. Functionally, functions in the biosynthesis of branched-chain amino acids. Catalyzes the dehydration of (2R,3R)-2,3-dihydroxy-3-methylpentanoate (2,3-dihydroxy-3-methylvalerate) into 2-oxo-3-methylpentanoate (2-oxo-3-methylvalerate) and of (2R)-2,3-dihydroxy-3-methylbutanoate (2,3-dihydroxyisovalerate) into 2-oxo-3-methylbutanoate (2-oxoisovalerate), the penultimate precursor to L-isoleucine and L-valine, respectively. The chain is Dihydroxy-acid dehydratase from Pseudomonas putida (strain GB-1).